The sequence spans 411 residues: 2,3-bisphosphoglycerate-independent phosphoglycerate mutase (411 aa).

The protein belongs to the BPG-independent phosphoglycerate mutase family. A-PGAM subfamily.

It catalyses the reaction (2R)-2-phosphoglycerate = (2R)-3-phosphoglycerate. It participates in carbohydrate degradation; glycolysis; pyruvate from D-glyceraldehyde 3-phosphate: step 3/5. Functionally, catalyzes the interconversion of 2-phosphoglycerate and 3-phosphoglycerate. This Thermococcus kodakarensis (strain ATCC BAA-918 / JCM 12380 / KOD1) (Pyrococcus kodakaraensis (strain KOD1)) protein is 2,3-bisphosphoglycerate-independent phosphoglycerate mutase.